The sequence spans 177 residues: ATP synthase subunit delta (177 aa).

It belongs to the ATPase delta chain family. As to quaternary structure, F-type ATPases have 2 components, F(1) - the catalytic core - and F(0) - the membrane proton channel. F(1) has five subunits: alpha(3), beta(3), gamma(1), delta(1), epsilon(1). F(0) has three main subunits: a(1), b(2) and c(10-14). The alpha and beta chains form an alternating ring which encloses part of the gamma chain. F(1) is attached to F(0) by a central stalk formed by the gamma and epsilon chains, while a peripheral stalk is formed by the delta and b chains.

It is found in the cell membrane. In terms of biological role, f(1)F(0) ATP synthase produces ATP from ADP in the presence of a proton or sodium gradient. F-type ATPases consist of two structural domains, F(1) containing the extramembraneous catalytic core and F(0) containing the membrane proton channel, linked together by a central stalk and a peripheral stalk. During catalysis, ATP synthesis in the catalytic domain of F(1) is coupled via a rotary mechanism of the central stalk subunits to proton translocation. Functionally, this protein is part of the stalk that links CF(0) to CF(1). It either transmits conformational changes from CF(0) to CF(1) or is implicated in proton conduction. The chain is ATP synthase subunit delta from Streptococcus suis (strain 98HAH33).